A 452-amino-acid chain; its full sequence is UPF0210 protein Dred_1672 (452 aa).

The protein belongs to the UPF0210 family. Homodimer.

This is UPF0210 protein Dred_1672 from Desulforamulus reducens (strain ATCC BAA-1160 / DSM 100696 / MI-1) (Desulfotomaculum reducens).